The chain runs to 223 residues: Uracil phosphoribosyltransferase (223 aa).

5-phospho-alpha-D-ribose 1-diphosphate contacts are provided by residues R86, R111, and 145–153 (DPILATGST). Residues I209 and 214-216 (GDA) contribute to the uracil site. D215 contacts 5-phospho-alpha-D-ribose 1-diphosphate.

It belongs to the UPRTase family. The cofactor is Mg(2+).

The catalysed reaction is UMP + diphosphate = 5-phospho-alpha-D-ribose 1-diphosphate + uracil. It participates in pyrimidine metabolism; UMP biosynthesis via salvage pathway; UMP from uracil: step 1/1. With respect to regulation, allosterically activated by GTP. Functionally, catalyzes the conversion of uracil and 5-phospho-alpha-D-ribose 1-diphosphate (PRPP) to UMP and diphosphate. This is Uracil phosphoribosyltransferase from Natronomonas pharaonis (strain ATCC 35678 / DSM 2160 / CIP 103997 / JCM 8858 / NBRC 14720 / NCIMB 2260 / Gabara) (Halobacterium pharaonis).